Reading from the N-terminus, the 354-residue chain is Phospho-N-acetylmuramoyl-pentapeptide-transferase (354 aa).

10 consecutive transmembrane segments (helical) span residues 23–43, 66–86, 88–108, 138–158, 161–181, 193–213, 227–247, 257–277, 282–302, and 331–351; these read IAFF…IAWA, TPTM…LLCS, LTNT…FIGF, FALS…FIPF, YALF…ITAS, GLAS…VYLC, VVGV…ILGF, VFMG…TGVV, ILLI…ILQV, and KIIV…LTTL.

It belongs to the glycosyltransferase 4 family. MraY subfamily. Mg(2+) is required as a cofactor.

The protein resides in the cell inner membrane. It catalyses the reaction UDP-N-acetyl-alpha-D-muramoyl-L-alanyl-gamma-D-glutamyl-meso-2,6-diaminopimeloyl-D-alanyl-D-alanine + di-trans,octa-cis-undecaprenyl phosphate = di-trans,octa-cis-undecaprenyl diphospho-N-acetyl-alpha-D-muramoyl-L-alanyl-D-glutamyl-meso-2,6-diaminopimeloyl-D-alanyl-D-alanine + UMP. It functions in the pathway cell wall biogenesis; peptidoglycan biosynthesis. Its function is as follows. Catalyzes the initial step of the lipid cycle reactions in the biosynthesis of the cell wall peptidoglycan: transfers peptidoglycan precursor phospho-MurNAc-pentapeptide from UDP-MurNAc-pentapeptide onto the lipid carrier undecaprenyl phosphate, yielding undecaprenyl-pyrophosphoryl-MurNAc-pentapeptide, known as lipid I. The chain is Phospho-N-acetylmuramoyl-pentapeptide-transferase from Campylobacter hominis (strain ATCC BAA-381 / DSM 21671 / CCUG 45161 / LMG 19568 / NCTC 13146 / CH001A).